The following is a 388-amino-acid chain: Tryptophan synthase beta chain (388 aa).

Lys86 is modified (N6-(pyridoxal phosphate)lysine).

It belongs to the TrpB family. As to quaternary structure, tetramer of two alpha and two beta chains. Pyridoxal 5'-phosphate is required as a cofactor.

It catalyses the reaction (1S,2R)-1-C-(indol-3-yl)glycerol 3-phosphate + L-serine = D-glyceraldehyde 3-phosphate + L-tryptophan + H2O. It participates in amino-acid biosynthesis; L-tryptophan biosynthesis; L-tryptophan from chorismate: step 5/5. Its function is as follows. The beta subunit is responsible for the synthesis of L-tryptophan from indole and L-serine. This is Tryptophan synthase beta chain (trpB) from Buchnera aphidicola subsp. Acyrthosiphon pisum (strain APS) (Acyrthosiphon pisum symbiotic bacterium).